A 650-amino-acid polypeptide reads, in one-letter code: DNA gyrase subunit B (650 aa).

Basic and acidic residues predominate over residues 400–414 (RRSQEARELTRRKSP). Positions 400-422 (RRSQEARELTRRKSPFDSGSLPG) are disordered. Residues 435 to 549 (SELYIVEGDS…QGNIFIAQPP (115 aa)) form the Toprim domain. E441, D514, and D516 together coordinate Mg(2+).

The protein belongs to the type II topoisomerase GyrB family. In terms of assembly, heterotetramer, composed of two GyrA and two GyrB chains. In the heterotetramer, GyrA contains the active site tyrosine that forms a transient covalent intermediate with DNA, while GyrB binds cofactors and catalyzes ATP hydrolysis. Requires Mg(2+) as cofactor. Mn(2+) is required as a cofactor. Ca(2+) serves as cofactor.

The protein resides in the cytoplasm. The catalysed reaction is ATP-dependent breakage, passage and rejoining of double-stranded DNA.. In terms of biological role, a type II topoisomerase that negatively supercoils closed circular double-stranded (ds) DNA in an ATP-dependent manner to modulate DNA topology and maintain chromosomes in an underwound state. Negative supercoiling favors strand separation, and DNA replication, transcription, recombination and repair, all of which involve strand separation. Also able to catalyze the interconversion of other topological isomers of dsDNA rings, including catenanes and knotted rings. Type II topoisomerases break and join 2 DNA strands simultaneously in an ATP-dependent manner. The polypeptide is DNA gyrase subunit B (Mycoplasma genitalium (strain ATCC 33530 / DSM 19775 / NCTC 10195 / G37) (Mycoplasmoides genitalium)).